Consider the following 340-residue polypeptide: DNA-directed RNA polymerase subunit alpha (340 aa).

The interval 1–233 (MYKNWRDLIR…EQLSIFINFD (233 aa)) is alpha N-terminal domain (alpha-NTD). The segment at 246 to 340 (DEIDKINENL…RLRGEQNEEE (95 aa)) is alpha C-terminal domain (alpha-CTD).

This sequence belongs to the RNA polymerase alpha chain family. In terms of assembly, homodimer. The RNAP catalytic core consists of 2 alpha, 1 beta, 1 beta' and 1 omega subunit. When a sigma factor is associated with the core the holoenzyme is formed, which can initiate transcription.

The catalysed reaction is RNA(n) + a ribonucleoside 5'-triphosphate = RNA(n+1) + diphosphate. DNA-dependent RNA polymerase catalyzes the transcription of DNA into RNA using the four ribonucleoside triphosphates as substrates. This is DNA-directed RNA polymerase subunit alpha from Pelobacter propionicus (strain DSM 2379 / NBRC 103807 / OttBd1).